Consider the following 288-residue polypeptide: Mediator of RNA polymerase II transcription subunit 8 (288 aa).

Residues 4-58 adopt a coiled-coil conformation; it reads EELKQLELLRNRFAQLTSNLGSLRTSVSNSNPLPTYESLQASVNILQANIRSIQD. Disordered regions lie at residues 122–150, 191–245, and 266–288; these read GGVH…APQD, VRTG…GGGM, and PGNV…APPR. Composition is skewed to acidic residues over residues 131–148 and 200–221; these read DYDD…DDAP and EESE…EDEA. The stretch at 180 to 228 forms a coiled coil; sequence TAEERAAGIENVRTGLRQTLEESEDDDEDEEEEEEDEEEDEAAAAAGNA. Residues 227-245 show a composition bias toward gly residues; that stretch reads NAGGLATGAGGSAAAGGGM.

Belongs to the Mediator complex subunit 8 family. As to quaternary structure, component of the Mediator complex.

It localises to the nucleus. Component of the Mediator complex, a coactivator involved in the regulated transcription of nearly all RNA polymerase II-dependent genes. Mediator functions as a bridge to convey information from gene-specific regulatory proteins to the basal RNA polymerase II transcription machinery. Mediator is recruited to promoters by direct interactions with regulatory proteins and serves as a scaffold for the assembly of a functional preinitiation complex with RNA polymerase II and the general transcription factors. The polypeptide is Mediator of RNA polymerase II transcription subunit 8 (MED8) (Chaetomium globosum (strain ATCC 6205 / CBS 148.51 / DSM 1962 / NBRC 6347 / NRRL 1970) (Soil fungus)).